The following is a 239-amino-acid chain: Phosducin-like protein 3 (239 aa).

Position 1 is an N-acetylmethionine (Met1). Residues 32–180 (EAEEEQRILQ…EGDIKAQFIG (149 aa)) form the Phosducin domain. Phosphoserine occurs at positions 43, 234, and 236. A thioredoxin fold region spans residues 91–239 (FGEVLEISGK…MKRDSDSEGD (149 aa)).

The protein belongs to the phosducin family. In terms of assembly, interacts (via thioredoxin fold region) with KDR/VEGFR2 (via juxtamembrane domain). Forms ternary complexes with the chaperonin CCT complex and actin substrate, leading to inhibition of actin folding. Interacts with XIAP (via BIR 3 and RING domain). Interacts with HSP90AA1 and HSP90AB1. N-terminal methionine acetylation destabilizes the protein.

The protein resides in the cytoplasm. Its subcellular location is the perinuclear region. The protein localises to the endoplasmic reticulum. Its function is as follows. Acts as a chaperone for the angiogenic VEGF receptor KDR/VEGFR2, increasing its abundance by inhibiting its ubiquitination and degradation. Inhibits the folding activity of the chaperonin-containing T-complex (CCT) which leads to inhibition of cytoskeletal actin folding. Acts as a chaperone during heat shock alongside HSP90 and HSP40/70 chaperone complexes. Modulates the activation of caspases during apoptosis. In Pongo abelii (Sumatran orangutan), this protein is Phosducin-like protein 3 (PDCL3).